Reading from the N-terminus, the 257-residue chain is Thiazole synthase (257 aa).

The active-site Schiff-base intermediate with DXP is Lys96. 1-deoxy-D-xylulose 5-phosphate contacts are provided by residues Gly157, 184 to 185 (AG), and 206 to 207 (NT).

Belongs to the ThiG family. Homotetramer. Forms heterodimers with either ThiH or ThiS.

Its subcellular location is the cytoplasm. It carries out the reaction [ThiS sulfur-carrier protein]-C-terminal-Gly-aminoethanethioate + 2-iminoacetate + 1-deoxy-D-xylulose 5-phosphate = [ThiS sulfur-carrier protein]-C-terminal Gly-Gly + 2-[(2R,5Z)-2-carboxy-4-methylthiazol-5(2H)-ylidene]ethyl phosphate + 2 H2O + H(+). It functions in the pathway cofactor biosynthesis; thiamine diphosphate biosynthesis. In terms of biological role, catalyzes the rearrangement of 1-deoxy-D-xylulose 5-phosphate (DXP) to produce the thiazole phosphate moiety of thiamine. Sulfur is provided by the thiocarboxylate moiety of the carrier protein ThiS. In vitro, sulfur can be provided by H(2)S. The polypeptide is Thiazole synthase (Agrobacterium fabrum (strain C58 / ATCC 33970) (Agrobacterium tumefaciens (strain C58))).